The chain runs to 430 residues: tRNA(Ile)-lysidine synthase (430 aa).

21-26 (SGGLDS) lines the ATP pocket.

This sequence belongs to the tRNA(Ile)-lysidine synthase family.

It localises to the cytoplasm. The catalysed reaction is cytidine(34) in tRNA(Ile2) + L-lysine + ATP = lysidine(34) in tRNA(Ile2) + AMP + diphosphate + H(+). Ligates lysine onto the cytidine present at position 34 of the AUA codon-specific tRNA(Ile) that contains the anticodon CAU, in an ATP-dependent manner. Cytidine is converted to lysidine, thus changing the amino acid specificity of the tRNA from methionine to isoleucine. The sequence is that of tRNA(Ile)-lysidine synthase from Salmonella agona (strain SL483).